We begin with the raw amino-acid sequence, 1986 residues long: MKTPENLEEPSATPNPSRTPTERFVYLEALLEGGAPWGFTLKGGLERGEPLIISKIEEGGKADSVSSGLQAGDEVIHINEVALSSPRREAVSLVKGSYKTLRLVVRRDVCAAPGHADPGTSKSLSSELLTCSPQHRKATWSGGVKLRLKQRCSEPATRPHSWHTTKFGETQPDVSMMQISQGTMGPPWHQSYHSSSSTSDLSNYDHAYLRRSPDQCSSQGSMESLEPSGGYPPCHLLSPAKSTSSIDQLGHLHNKRDSAYSSFSTSSSIFEYPPPGGSARERSGSMDVISARGGLLEGMRQADIRYVKTVYDTRRGVSSEYEVNPSALLLQGRDAHASADSQGCAKWHSIPRGKGTPSPSWSQQCSGSLETATDNLPQKAGAPLPPTRSDSYAAFRHRERPSSWSSLDQKRFCRPQTNSSGSQKTPFAEDQLHTVPERSPENSPPVKSKHNYTQKAQPGQPLLPTGIYPVPSPEPHFAQVPQPSVSSNGTVYPALVKESGYTAAQGTCNKMATLDENGNQNEASRPGFAFCQPLEHNSVTPVEKRPEPTAKYIYKVHFSSVPENEDSSLKRHITPPHGHSPYPSERKNIHGGSRACSNHHSLSSPQAQALHVGDDRRPSRLSQPWEGDFQEDHNANLRQKVEREGQGQGLSGNSGRTRSAFSSLQNIPESLRRQSNVELGEAQEVHPGGRSKVEDPGRKAGASDIRGYLDRSVSYPRPEGKMNAVDSVHSADSRYEESPAPALPQTSGASQRRLSSSSSAAPQYRKPHCSVLEKVSRIEEREQGRHRPLSVGSSAYGPGYRPGRTGPTPSTSSSDLDDPKAGSVHFSESTEHLRNGEQNPPNGEAKQEEASRPQCSHLIRRAPADGRGPPARGGEPSRPEARLLRSQSTFQLYSEAEREASWSEDRPGTPESPLLDAPFSRAYRNSIKDAQSRVLGATSFRRRDLEPGTPATSRPWRPRPASAHVGMRSPEAAVPSSSPHTPRERHSVTPAAPQAARRGPRRRLTVEQKKRSYSEPEKMNEVGVSEEAEPTPCGPPRPAQPRFSESTVADRRRIFERDGKACSTLSLSGPELKQFQQSALADYIQRKTGKRPTGAACTPEAGLRERAQSAYLQAGPAAPDGPGLASACSLSSLREPEALPRKEHTHPSAADGPQAPRDRSSSFASGRLVGERRRWDPQVPRQLLSGANCEPRGVQRMDGAPGGPPSWGMVAGKAGKSKSAEDLLERSDTLAVPVHVRSRSSPTSDKKGQDVLLREGSNFGFVKDPCCLAGPGPRSLSCSDKGQNELALPLHHPTPCWNGSGCKATVASSAPPESSGAADHLKQRRAPGPRPLSAGMHGHFPDARAASLSSPLPSPVPSASPVPSSYRSQLAMDQQTGQQPPSSPASAVTQPTSPRSPELSSPAYGLGEGMWKRTSLPQRPPPPWVKWAHAVREDGLAEDTLAPEFANLKHYRNQPSRPSSCSTSDPDTPGRISLRISESALQPSPPPRGDYDDEVFMKDLHPKVTSSPTFEALPPPPPPSPPSEEPLVNGTDDFPPPPPPQALCEVLLDGEASTEAGSGPCRIPRVMVTREGHVPGAAHSEGSQIMTATPPQTSAKGSEAESNTPSSASAQPQLNGSPGKQLCPSQTRNLTYEPVERTQDLGKKTHAEPQKTSEDIRTEALAKEIVHQDKSLADILDPDSRMKTTMDLMEGLFPGDASVLMDSGAKRKALDITARRAGCEAKASDHKEAVSVLVNCPAYYSVSAAKAELLNKIKDMPEELQEEEGQEDVNEKKAELIGSLTHKLESLQEAKGSLLTDIKLNNALGEEVEALISELCKPNEFDKYKMFIGDLDKVVNLLLSLSGRLARVENVLRGLGEDASKEERSSLNEKRKVLAGQHEDARELKENLDRRERVVLDILANYLSAEQLQDYQHFVKMKSTLLIEQRKLDDKIKLGQEQVRCLLESLPSDFRPKAGAISLPPALTGHATPGGTSVFGGVFPTLTSPL.

The disordered stretch occupies residues 1-21; the sequence is MKTPENLEEPSATPNPSRTPT. Positions 24 to 109 constitute a PDZ domain; it reads FVYLEALLEG…TLRLVVRRDV (86 aa). Disordered regions lie at residues 152–199, 211–239, 265–285, 342–463, and 564–1055; these read CSEP…SSTS, RSPD…LLSP, TSSS…RSGS, QGCA…QPLL, and NEDS…RRIF. Serine 212 bears the Phosphoserine mark. 2 stretches are compositionally biased toward polar residues: residues 357–376 and 415–425; these read PSPS…TDNL and PQTNSSGSQKT. Residues 430–440 show a composition bias toward basic and acidic residues; the sequence is DQLHTVPERSP. Phosphoserine is present on residues serine 439 and serine 443. The span at 595–607 shows a compositional bias: polar residues; it reads ACSNHHSLSSPQA. The span at 630–645 shows a compositional bias: basic and acidic residues; it reads QEDHNANLRQKVEREG. Residues 653–677 show a composition bias toward polar residues; the sequence is NSGRTRSAFSSLQNIPESLRRQSNV. Residues 747 to 761 are compositionally biased toward low complexity; sequence SGASQRRLSSSSSAA. A compositionally biased stretch (basic and acidic residues) spans 774 to 785; sequence KVSRIEEREQGR. 2 stretches are compositionally biased toward low complexity: residues 796–814 and 865–874; these read YGPG…TSSS and DGRGPPARGG. The residue at position 888 (serine 888) is a Phosphoserine. Basic and acidic residues predominate over residues 895-908; it reads EAEREASWSEDRPG. Threonine 909 carries the post-translational modification Phosphothreonine. 2 positions are modified to phosphoserine: serine 912 and serine 969. Residues 927-1023 enclose the ASD1 domain; sequence IKDAQSRVLG…SEPEKMNEVG (97 aa). Basic and acidic residues predominate over residues 1004–1020; it reads LTVEQKKRSYSEPEKMN. 2 positions are modified to phosphoserine: serine 1063 and serine 1066. Disordered regions lie at residues 1083–1102, 1107–1223, 1304–1425, and 1446–1654; these read YIQR…PEAG, AQSA…AEDL, ATVA…PPWV, and ANLK…KTSE. Positions 1114–1127 are enriched in low complexity; that stretch reads AGPAAPDGPGLASA. Residues 1134–1146 are compositionally biased toward basic and acidic residues; that stretch reads REPEALPRKEHTH. A phosphoserine mark is found at tryptophan 1175, valine 1179, and serine 1219. Positions 1307-1318 are enriched in low complexity; it reads ASSAPPESSGAA. 2 positions are modified to phosphoserine: serine 1350 and serine 1354. Polar residues predominate over residues 1366–1399; the sequence is YRSQLAMDQQTGQQPPSSPASAVTQPTSPRSPEL. Low complexity predominate over residues 1455 to 1469; the sequence is PSRPSSCSTSDPDTP. The span at 1513 to 1524 shows a compositional bias: pro residues; the sequence is LPPPPPPSPPSE. Residues 1581–1630 show a composition bias toward polar residues; it reads EGSQIMTATPPQTSAKGSEAESNTPSSASAQPQLNGSPGKQLCPSQTRNL. Basic and acidic residues predominate over residues 1634-1654; the sequence is PVERTQDLGKKTHAEPQKTSE. In terms of domain architecture, ASD2 spans 1659 to 1947; sequence EALAKEIVHQ…QVRCLLESLP (289 aa). Residues 1844 to 1890 adopt a coiled-coil conformation; sequence RLARVENVLRGLGEDASKEERSSLNEKRKVLAGQHEDARELKENLDR.

Belongs to the shroom family. In terms of assembly, interacts with F-actin. Interacts with ROCK1.

The protein resides in the cell junction. It is found in the adherens junction. It localises to the cytoplasm. The protein localises to the cytoskeleton. Its subcellular location is the apical cell membrane. Functionally, controls cell shape changes in the neuroepithelium during neural tube closure. Induces apical constriction in epithelial cells by promoting the apical accumulation of F-actin and myosin II, and probably by bundling stress fibers. Induces apicobasal cell elongation by redistributing gamma-tubulin and directing the assembly of robust apicobasal microtubule arrays. The sequence is that of Protein Shroom3 (Shroom3) from Mus musculus (Mouse).